The following is a 525-amino-acid chain: CTP synthase (525 aa).

The segment at 1-269 is amidoligase domain; sequence MKYIIVTGGV…ADAITTHLHL (269 aa). Ser12 contributes to the CTP binding site. Ser12 is a UTP binding site. ATP is bound by residues 13–18 and Asp70; that span reads GLGKGI. 2 residues coordinate Mg(2+): Asp70 and Glu144. CTP contacts are provided by residues 151 to 153, 190 to 195, and Lys226; these read DIE and KTKPTQ. Residues 190-195 and Lys226 each bind UTP; that span reads KTKPTQ. Residues 292–524 enclose the Glutamine amidotransferase type-1 domain; the sequence is VAIVSKYGIE…VSACRKNKKT (233 aa). Position 348 (Gly348) interacts with L-glutamine. Residue Cys375 is the Nucleophile; for glutamine hydrolysis of the active site. Residues 376-379, Glu399, and Arg454 each bind L-glutamine; that span reads LGFQ. Residues His497 and Glu499 contribute to the active site.

The protein belongs to the CTP synthase family. As to quaternary structure, homotetramer.

The enzyme catalyses UTP + L-glutamine + ATP + H2O = CTP + L-glutamate + ADP + phosphate + 2 H(+). It carries out the reaction L-glutamine + H2O = L-glutamate + NH4(+). It catalyses the reaction UTP + NH4(+) + ATP = CTP + ADP + phosphate + 2 H(+). The protein operates within pyrimidine metabolism; CTP biosynthesis via de novo pathway; CTP from UDP: step 2/2. With respect to regulation, allosterically activated by GTP, when glutamine is the substrate; GTP has no effect on the reaction when ammonia is the substrate. The allosteric effector GTP functions by stabilizing the protein conformation that binds the tetrahedral intermediate(s) formed during glutamine hydrolysis. Inhibited by the product CTP, via allosteric rather than competitive inhibition. Catalyzes the ATP-dependent amination of UTP to CTP with either L-glutamine or ammonia as the source of nitrogen. Regulates intracellular CTP levels through interactions with the four ribonucleotide triphosphates. This Methanosphaerula palustris (strain ATCC BAA-1556 / DSM 19958 / E1-9c) protein is CTP synthase.